Here is a 423-residue protein sequence, read N- to C-terminus: Serine--tRNA ligase 1 (423 aa).

231–233 (TAE) is a binding site for L-serine. Residue 262-264 (RSE) participates in ATP binding. L-serine is bound at residue E285. 349–352 (EISS) provides a ligand contact to ATP. S384 serves as a coordination point for L-serine.

The protein belongs to the class-II aminoacyl-tRNA synthetase family. Type-1 seryl-tRNA synthetase subfamily. As to quaternary structure, homodimer. The tRNA molecule binds across the dimer.

It is found in the cytoplasm. The catalysed reaction is tRNA(Ser) + L-serine + ATP = L-seryl-tRNA(Ser) + AMP + diphosphate + H(+). The enzyme catalyses tRNA(Sec) + L-serine + ATP = L-seryl-tRNA(Sec) + AMP + diphosphate + H(+). The protein operates within aminoacyl-tRNA biosynthesis; selenocysteinyl-tRNA(Sec) biosynthesis; L-seryl-tRNA(Sec) from L-serine and tRNA(Sec): step 1/1. Catalyzes the attachment of serine to tRNA(Ser). Is also able to aminoacylate tRNA(Sec) with serine, to form the misacylated tRNA L-seryl-tRNA(Sec), which will be further converted into selenocysteinyl-tRNA(Sec). This chain is Serine--tRNA ligase 1, found in Enterococcus faecalis (strain ATCC 700802 / V583).